The sequence spans 236 residues: DNA repair protein RecO (236 aa).

This sequence belongs to the RecO family.

In terms of biological role, involved in DNA repair and RecF pathway recombination. This is DNA repair protein RecO from Haemophilus influenzae (strain PittGG).